The sequence spans 488 residues: Stress activated transcription factor atfs-1 (488 aa).

A mitochondrion-targeting transit peptide spans methionine 1–arginine 23. Positions serine 138–lysine 191 are disordered. Low complexity predominate over residues glycine 142–threonine 168. Lysine 342 participates in a covalent cross-link: Glycyl lysine isopeptide (Lys-Gly) (interchain with G-Cter in smo-1). Positions glutamine 353–tyrosine 400 are disordered. The 64-residue stretch at aspartate 420–methionine 483 folds into the bZIP domain. The basic motif stretch occupies residues arginine 425–arginine 460. The short motif at arginine 436 to lysine 441 is the Nuclear localization signal element. The interval leucine 462–leucine 469 is leucine-zipper.

It belongs to the bZIP family. Post-translationally, may be desumoylated by ulp-4. Ubiquitously expressed.

The protein localises to the mitochondrion matrix. It localises to the cytoplasm. Its subcellular location is the nucleus. Functionally, acts as a transcription factor during mitochondrial stress by activating the mitochondrial unfolded protein response (mtUPR). Induces nuclear and mitochondrial gene transcription, including genes coding for mitochondrial chaperones and proteins involved in glycolysis, amino acid catabolism and innate immunity. Following mitochondrial stress, restores mitochondrial respiratory capacity by limiting the transcription of oxidative phosphorylation (OXPHOS) machinery genes and by promoting the assembly of OXPHOS complexes via the up-regulation of chaperone and assembly factor genes. Component of a feedback loop involving atfs-1, atgl-1 and hlh-11. Acts together with flp-7 to negatively regulate the expression of the transcription regulator hlh-11, to promote expression of atgl-1, and thus atgl-1-dependent fat oxidation in response to mitochondrial stress. In addition, functions with hlh-11 to maintain lifespan. Promotes mtDNA maintenance and propagation of deleterious mtDNA. This Caenorhabditis elegans protein is Stress activated transcription factor atfs-1.